We begin with the raw amino-acid sequence, 514 residues long: Maturase K (514 aa).

It belongs to the intron maturase 2 family. MatK subfamily.

Its subcellular location is the plastid. It localises to the chloroplast. Functionally, usually encoded in the trnK tRNA gene intron. Probably assists in splicing its own and other chloroplast group II introns. This Phoenix dactylifera (Date palm) protein is Maturase K.